The primary structure comprises 206 residues: Protein Nef (206 aa).

Glycine 2 carries the N-myristoyl glycine; by host lipid modification. Phosphoserine; by host is present on serine 6. The segment at 62 to 65 (EEEK) is acidic; interacts with host PACS1 and PACS2; stabilizes the interaction of NEF/MHC-I with host AP1M1; necessary for MHC-I internalization. The segment at 69–78 (PVTPQVPLRP) is SH3-binding; interaction with Src family tyrosine kinases. The PxxP; stabilizes the interaction of NEF/MHC-I with host AP1M1; necessary for MHC-I internalization motif lies at 72–75 (PQVP). The tract at residues 108–124 (DILDLWIYHTQGYFPDW) is mediates dimerization, Nef-PTE1 interaction. Residues 148-180 (VEPEKLEEANKGENTSLLHPVSLHGMDDPEREV) are binding to ATP6V1H. The Dileucine internalization motif; necessary for CD4 internalization motif lies at 164–165 (LL). The short motif at 174–175 (DD) is the Diacidic; necessary for CD4 internalization element.

This sequence belongs to the lentivirus primate group Nef protein family. In terms of assembly, monomer; cytosolic form. Homodimer; membrane bound form. Interacts with Nef associated p21-activated kinase (PAK2); this interaction activates PAK2. Associates with the Nef-MHC-I-AP1 complex; this complex is required for MHC-I internalization. Interacts (via C-terminus) with host PI3-kinase. Interacts with host PACS1; this interaction seems to be weak. Interacts with host PACS2. Interacts with host LCK and MAPK3; these interactions inhibit the kinase activity of the latter. Interacts with host ATP6V1H; this interaction may play a role in CD4 endocytosis. Associates with the CD4-Nef-AP2 complex; this complex is required for CD4 internalization. Interacts with host AP2 subunit alpha and AP2 subunit sigma2. Interacts with TCR-zeta chain; this interaction up-regulates the Fas ligand (FasL) surface expression. Interacts with host HCK, LYN, and SRC; these interactions activate the Src family kinases. Interacts with MAP3K5; this interaction inhibits the Fas and TNFR-mediated death signals. Interacts with beta-COP and PTE1. Interacts with human RACK1; this increases Nef phosphorylation by PKC. Interacts with TP53; this interaction decreases the half-life of TP53, protecting the infected cell against p53-mediated apoptosis. The virion-associated Nef proteins are cleaved by the viral protease to release the soluble C-terminal core protein. Nef is probably cleaved concomitantly with viral structural proteins on maturation of virus particles. Post-translationally, myristoylated. In terms of processing, phosphorylated on serine residues, probably by host PKCdelta and theta.

The protein localises to the host cell membrane. It localises to the virion. It is found in the secreted. The protein resides in the host Golgi apparatus membrane. Its function is as follows. Factor of infectivity and pathogenicity, required for optimal virus replication. Alters numerous pathways of T-lymphocyte function and down-regulates immunity surface molecules in order to evade host defense and increase viral infectivity. Alters the functionality of other immunity cells, like dendritic cells, monocytes/macrophages and NK cells. In terms of biological role, in infected CD4(+) T-lymphocytes, down-regulates the surface MHC-I, mature MHC-II, CD4, CD28, CCR5 and CXCR4 molecules. Mediates internalization and degradation of host CD4 through the interaction of with the cytoplasmic tail of CD4, the recruitment of AP-2 (clathrin adapter protein complex 2), internalization through clathrin coated pits, and subsequent transport to endosomes and lysosomes for degradation. Diverts host MHC-I molecules to the trans-Golgi network-associated endosomal compartments by an endocytic pathway to finally target them for degradation. MHC-I down-regulation may involve AP-1 (clathrin adapter protein complex 1) or possibly Src family kinase-ZAP70/Syk-PI3K cascade recruited by PACS2. In consequence infected cells are masked for immune recognition by cytotoxic T-lymphocytes. Decreasing the number of immune receptors also prevents reinfection by more HIV particles (superinfection). Down-regulates host SERINC3 and SERINC5 thereby excluding these proteins from the viral particles. Virion infectivity is drastically higher when SERINC3 or SERINC5 are excluded from the viral envelope, because these host antiviral proteins impair the membrane fusion event necessary for subsequent virion penetration. Functionally, bypasses host T-cell signaling by inducing a transcriptional program nearly identical to that of anti-CD3 cell activation. Interaction with TCR-zeta chain up-regulates the Fas ligand (FasL). Increasing surface FasL molecules and decreasing surface MHC-I molecules on infected CD4(+) cells send attacking cytotoxic CD8+ T-lymphocytes into apoptosis. Plays a role in optimizing the host cell environment for viral replication without causing cell death by apoptosis. Protects the infected cells from apoptosis in order to keep them alive until the next virus generation is ready to strike. Inhibits the Fas and TNFR-mediated death signals by blocking MAP3K5/ASK1. Decreases the half-life of TP53, protecting the infected cell against p53-mediated apoptosis. Inhibits the apoptotic signals regulated by the Bcl-2 family proteins through the formation of a Nef/PI3-kinase/PAK2 complex that leads to activation of PAK2 and induces phosphorylation of host BAD. Its function is as follows. Extracellular Nef protein targets CD4(+) T-lymphocytes for apoptosis by interacting with CXCR4 surface receptors. This Homo sapiens (Human) protein is Protein Nef.